The sequence spans 550 residues: Hydroxylamine reductase (550 aa).

4 residues coordinate [2Fe-2S] cluster: Cys-3, Cys-6, Cys-18, and Cys-25. His-249, Glu-273, Cys-317, Cys-405, Cys-433, Cys-458, Glu-492, and Lys-494 together coordinate hybrid [4Fe-2O-2S] cluster. Cysteine persulfide is present on Cys-405.

This sequence belongs to the HCP family. The cofactor is [2Fe-2S] cluster. It depends on hybrid [4Fe-2O-2S] cluster as a cofactor.

It is found in the cytoplasm. The catalysed reaction is A + NH4(+) + H2O = hydroxylamine + AH2 + H(+). In terms of biological role, catalyzes the reduction of hydroxylamine to form NH(3) and H(2)O. This chain is Hydroxylamine reductase, found in Escherichia coli O7:K1 (strain IAI39 / ExPEC).